Reading from the N-terminus, the 602-residue chain is MFS-type efflux transporter pyiT (602 aa).

Residues 1-33 are disordered; that stretch reads MEKAKDSLPTTGDPVPSQGTINPVDETGGSASD. 7 helical membrane-spanning segments follow: residues 43-63, 123-143, 156-176, 185-205, 212-232, 251-271, and 282-302; these read FWFT…EGSV, WLTI…GGAT, GLGS…LLPL, IIFM…GILV, WVFY…FFFL, FFGN…LTYG, and IIVS…FEAS. Residue asparagine 317 is glycosylated (N-linked (GlcNAc...) asparagine). 6 helical membrane-spanning segments follow: residues 325–345, 357–377, 386–406, 410–430, 451–471, and 524–544; these read IATF…PLYF, GVML…GGAL, NIHF…TILN, SLAV…VPTA, TFAF…AAIF, and LERV…VIFL. A compositionally biased stretch (polar residues) spans 564–585; it reads IPQTAADNSASRPNTINDTASQ. Positions 564–602 are disordered; sequence IPQTAADNSASRPNTINDTASQAPILKQRRSTNQERETV. Asparagine 580 is a glycosylation site (N-linked (GlcNAc...) asparagine).

Belongs to the major facilitator superfamily.

Its subcellular location is the cell membrane. Its function is as follows. MFS-type efflux transporter; part of the gene cluster that mediates the biosynthesis of the mycotoxin pyrichalasin H, a tyrosine-derived cytochalasan that inhibits the growth of rice seedlings, but also inhibits lymphocyte capping and actin polymerization and alters cell morphology. Pyrichalasin H is indicated as the responsible agent for the genus-specific pathogenicity of M.grisea toward crabgrass. PyiT might be involved in the excretion of pyrichalasin H. This is MFS-type efflux transporter pyiT from Pyricularia grisea (Crabgrass-specific blast fungus).